Here is a 565-residue protein sequence, read N- to C-terminus: Oxygen-dependent choline dehydrogenase (565 aa).

Position 6–35 (6–35) interacts with FAD; the sequence is DYIIVGAGSAGNTLATRLTEDAGVTVLLLE. H475 functions as the Proton acceptor in the catalytic mechanism.

Belongs to the GMC oxidoreductase family. FAD serves as cofactor.

It carries out the reaction choline + A = betaine aldehyde + AH2. The catalysed reaction is betaine aldehyde + NAD(+) + H2O = glycine betaine + NADH + 2 H(+). The protein operates within amine and polyamine biosynthesis; betaine biosynthesis via choline pathway; betaine aldehyde from choline (cytochrome c reductase route): step 1/1. In terms of biological role, involved in the biosynthesis of the osmoprotectant glycine betaine. Catalyzes the oxidation of choline to betaine aldehyde and betaine aldehyde to glycine betaine at the same rate. This is Oxygen-dependent choline dehydrogenase from Pseudomonas putida (strain ATCC 700007 / DSM 6899 / JCM 31910 / BCRC 17059 / LMG 24140 / F1).